We begin with the raw amino-acid sequence, 896 residues long: Translation initiation factor IF-2 (896 aa).

Positions 1 to 260 (MDIENTNKPD…AQTNKKAHKA (260 aa)) are disordered. Residues 19-34 (KAADSKPESGKTDSKR) show a composition bias toward basic and acidic residues. Low complexity predominate over residues 56 to 66 (EESSGGKASGK). Over residues 85–136 (SVKEKKPDERLEETKKTAPRFEDKKSDAPSAQNEKRSFDSAKKEEKQTERKK) the composition is skewed to basic and acidic residues. Positions 168–177 (RGQGNRPQRP) are enriched in low complexity. Residues 375–544 (PRPPVVTIMG…LLQAEVLELK (170 aa)) enclose the tr-type G domain. The tract at residues 384–391 (GHVDHGKT) is G1. 384–391 (GHVDHGKT) is a GTP binding site. Residues 409–413 (GITQH) form a G2 region. The tract at residues 430 to 433 (DTPG) is G3. GTP is bound by residues 430 to 434 (DTPGH) and 484 to 487 (NKVD). The interval 484–487 (NKVD) is G4. Residues 520-522 (SAL) form a G5 region. Positions 877–896 (SDSEKYKAPEIKEEGTETDE) are disordered.

The protein belongs to the TRAFAC class translation factor GTPase superfamily. Classic translation factor GTPase family. IF-2 subfamily.

The protein localises to the cytoplasm. Functionally, one of the essential components for the initiation of protein synthesis. Protects formylmethionyl-tRNA from spontaneous hydrolysis and promotes its binding to the 30S ribosomal subunits. Also involved in the hydrolysis of GTP during the formation of the 70S ribosomal complex. The polypeptide is Translation initiation factor IF-2 (Treponema denticola (strain ATCC 35405 / DSM 14222 / CIP 103919 / JCM 8153 / KCTC 15104)).